The sequence spans 79 residues: uncharacterized protein (79 aa).

This is an uncharacterized protein from Homo sapiens (Human).